The primary structure comprises 516 residues: Golgin-84 (516 aa).

At 1–492 (MSSWITGLAD…TFLRRYPMMR (492 aa)) the chain is on the cytoplasmic side. Residues 28–80 (QTENATGSADPMRRSMTSSTQSLSTSLKSTLSPVRRSGANSSSSVKSDGGVSV) are disordered. The segment covering 42–80 (SMTSSTQSLSTSLKSTLSPVRRSGANSSSSVKSDGGVSV) has biased composition (low complexity). 2 positions are modified to phosphoserine: S64 and S74. Residues 108–423 (TNELAAFKIA…KAQTQLQQNM (316 aa)) are a coiled coil. Residues 493 to 513 (VSVIVYVALLHLWVMFVLLST) form a helical; Anchor for type IV membrane protein membrane-spanning segment. Over 514–516 (TPN) the chain is Lumenal.

The protein resides in the golgi apparatus membrane. Its function is as follows. May be involved in maintaining Golgi structure and in intra-Golgi transport. This Drosophila melanogaster (Fruit fly) protein is Golgin-84 (Golgin84).